Reading from the N-terminus, the 121-residue chain is Conopressin-conophysin (121 aa).

An N-terminal signal peptide occupies residues 1 to 20 (MGRLTMALCWLLLLLLTTQA). The cysteines at positions 21 and 26 are disulfide-linked. A 4-hydroxyproline; partial; in Conopressin-ba1c modification is found at Pro-27. Glycine amide is present on Gly-29. 7 cysteine pairs are disulfide-bonded: Cys-43–Cys-83, Cys-46–Cys-57, Cys-51–Cys-73, Cys-58–Cys-63, Cys-90–Cys-108, Cys-102–Cys-120, and Cys-109–Cys-114.

It belongs to the vasopressin/oxytocin family. In terms of tissue distribution, expressed by the venom duct.

Its subcellular location is the secreted. In Conus bayani (Bayan's cone), this protein is Conopressin-conophysin.